A 330-amino-acid chain; its full sequence is MAAPRSWALWSFCGCGWSRAVSGCRLPGLRSSSPRGPLGARLLSQEKEATETHFGFETVSEEEKGGKVYQVFESVAKKYDVMNDMMSLGIHRVWKDLLLWKMRPFPGTQLLDVAGGTGDIAFRFLNYVQAQHQRKQKRQLRAQQNLSWEEIARKYQNEEDSLGGSHVMVCDINKEMLKIGKQKARAQGYKAGLAWILGDAEELPFDDNKFDVYTIAFGIRNVTHIDQALQEAHRVLKPGGRFLCLEFSQVNNPLLSRLYDVYSFQVIPVLGEVIAGDWKSYQYLVESIRQFPSQEEFKEMIEDAGFQKVTYENLTSGIVAIHSGFKLYLR.

A mitochondrion-targeting transit peptide spans 1-42 (MAAPRSWALWSFCGCGWSRAVSGCRLPGLRSSSPRGPLGARL). Residues T117, D171, and 199-200 (DA) each bind S-adenosyl-L-methionine.

It belongs to the class I-like SAM-binding methyltransferase superfamily. MenG/UbiE family. In terms of assembly, component of a multi-subunit COQ enzyme complex, composed of at least COQ3, COQ4, COQ5, COQ6, COQ7 and COQ9. Interacts with PYURF; the interaction is direct, stabilizes COQ5 protein and associates PYURF with COQ enzyme complex.

Its subcellular location is the mitochondrion inner membrane. It catalyses the reaction 2-methoxy-6-(all-trans-decaprenyl)benzene-1,4-diol + S-adenosyl-L-methionine = 5-methoxy-2-methyl-3-(all-trans-decaprenyl)benzene-1,4-diol + S-adenosyl-L-homocysteine + H(+). It participates in cofactor biosynthesis; ubiquinone biosynthesis. In terms of biological role, methyltransferase required for the conversion of 2-decaprenyl-6-methoxy-1,4-benzoquinol (DDMQH2) to 2-decaprenyl-3-methyl-6-methoxy-1,4-benzoquinol (DMQH2). This Bos taurus (Bovine) protein is 2-methoxy-6-polyprenyl-1,4-benzoquinol methylase, mitochondrial.